The primary structure comprises 362 residues: Cobalt-precorrin-5B C(1)-methyltransferase (362 aa).

It belongs to the CbiD family.

The catalysed reaction is Co-precorrin-5B + S-adenosyl-L-methionine = Co-precorrin-6A + S-adenosyl-L-homocysteine. It functions in the pathway cofactor biosynthesis; adenosylcobalamin biosynthesis; cob(II)yrinate a,c-diamide from sirohydrochlorin (anaerobic route): step 6/10. Catalyzes the methylation of C-1 in cobalt-precorrin-5B to form cobalt-precorrin-6A. In Burkholderia ambifaria (strain MC40-6), this protein is Cobalt-precorrin-5B C(1)-methyltransferase.